The primary structure comprises 596 residues: Transketolase-like protein 1 (596 aa).

His46 is a binding site for substrate. Thiamine diphosphate is bound by residues Ser49 and 94-96 (GWL). Asp126 is a binding site for Mg(2+). Residues Gly127 and Asn156 each coordinate thiamine diphosphate. Mg(2+)-binding residues include Asn156 and Leu158. Residues Lys218 and His232 each coordinate thiamine diphosphate. Residues His232, Arg292, and Ser319 each coordinate substrate. Glu340 and Phe366 together coordinate thiamine diphosphate. The active-site Proton donor is Glu340. Substrate-binding residues include His390 and Asp398. Gln402 is a binding site for thiamine diphosphate. Arg448 is a binding site for substrate.

Belongs to the transketolase family. Homodimer. It depends on Mg(2+) as a cofactor. Ca(2+) serves as cofactor. Requires Mn(2+) as cofactor. The cofactor is Co(2+). Thiamine diphosphate is required as a cofactor. As to expression, widely expressed. Expressed in endothelial cells and in peripheral neurons (at protein level). Not expressed in fetal neocortex. In terms of tissue distribution, expressed in fetal neocortex.

The protein resides in the cytoplasm. It carries out the reaction D-sedoheptulose 7-phosphate + D-glyceraldehyde 3-phosphate = aldehydo-D-ribose 5-phosphate + D-xylulose 5-phosphate. In terms of biological role, catalyzes the transfer of a two-carbon ketol group from a ketose donor to an aldose acceptor, via a covalent intermediate with the cofactor thiamine pyrophosphate. Functionally, during fetal neocortex development, may be essential to maintain the full number of basal radial glia (bRG). bRG are neural progenitor cells that undergo asymmetric divisions, generating a bRG (self-renewal) and a neuron, in contrast to basal intermediate progenitors (bIPs), which typically divide once to give rise to 2 neurons. bRG generate more cortical neurons over time than bIPs. The polypeptide is Transketolase-like protein 1 (TKTL1) (Homo sapiens (Human)).